The following is a 47-amino-acid chain: Large ribosomal subunit protein bL34 (47 aa).

It belongs to the bacterial ribosomal protein bL34 family.

This Corynebacterium glutamicum (strain R) protein is Large ribosomal subunit protein bL34.